Reading from the N-terminus, the 65-residue chain is Kappa-scoloptoxin(04)-Ssd1a (65 aa).

Positions 1–24 are cleaved as a signal peptide; that stretch reads MKKTCVVSVFLVLLLLKFHDLSMG. Positions 25–36 are excised as a propeptide; sequence EEISPLKKVAPR. 2 disulfide bridges follow: Cys-42/Cys-53 and Cys-47/Cys-60.

As to expression, expressed by the venom gland.

The protein resides in the secreted. In terms of biological role, voltage-gated potassium channel inhibitor. This chain is Kappa-scoloptoxin(04)-Ssd1a, found in Scolopendra dehaani (Thai centipede).